Here is a 200-residue protein sequence, read N- to C-terminus: Holliday junction resolvase RecU (200 aa).

The interval 1–25 is disordered; sequence MTIRYPNGKRYNQASQPQKTPIKTH. The span at 10–25 shows a compositional bias: polar residues; the sequence is RYNQASQPQKTPIKTH. The Mg(2+) site is built by Thr-85, Asp-87, Glu-100, and Gln-119.

It belongs to the RecU family. Mg(2+) is required as a cofactor.

The protein resides in the cytoplasm. It carries out the reaction Endonucleolytic cleavage at a junction such as a reciprocal single-stranded crossover between two homologous DNA duplexes (Holliday junction).. Endonuclease that resolves Holliday junction intermediates in genetic recombination. Cleaves mobile four-strand junctions by introducing symmetrical nicks in paired strands. Promotes annealing of linear ssDNA with homologous dsDNA. Required for DNA repair, homologous recombination and chromosome segregation. This chain is Holliday junction resolvase RecU, found in Bacillus cereus (strain B4264).